The following is an 807-amino-acid chain: MSNYDSIFIKSLRWIQKWLVQTIVVPHDPLTDLNLDPSKPVVYVMKTESISDLAALSGITANFGLPSPYDPLTLDKVSIARVVCLEGRKPMIGQREGGEKFLDSFTQLLALHKQDKQLDIQLVPVSLYWGRTPGKEDDTMKAAVFERENPTWLRKFFMILFLGRHNFVQFSNAVSLRHMADEHGTDKSIAHKLVRVARVHFRRQRKVMTGPLLPNRQALFNALLKSESIKKAIEEEATNKKISIEKARETAIVYLDEIAADYSDSLVRITERFLTWLWNKLYSGINIERAEQVRQLHHDGHEIVYVPCHRSHMDYLLISYILYYQGMVPPHIAAGINLNFWPAGPMFRRGGAFFIRRSFNGNKLYTAVFREYLDQLFAKGYSVEYFTEGGRSRTGRLLAPKTGMIAMTMNSVLRGIERPVTLVPVYLGYDHVMEVATYHKELSGKKKQKESLWQVFGAIRKLGNFGQGYVNFGEPINMQNFLTEQAPEWRAELAKDPEQKPSWFTPAVNVLANRVMTNINGAAAASSVTLTSLILLASEQNALERTQLERQLDLYLNLLKKVPYTPFTSVAQGDSQQVVDHCLGLNKFISTRDALGEIISIDPKIAVTMSYYRNNIIHLMVVPSLIASCLVQYEVRSRSEIKAIVNDFYPLLKAELFMGIADLDSYIDDIIDLLIEEQLVEESAGLSIVESHISQLWLMAQTVSETLQRYAIIFNLLAHKPNVERADLENDSHLLAQRLGALHGITAPEFYDKKLYNTLSVKLKELGYLSAVEKQVDVARIRDHANGLLWSSVRQTIIDSVAAEHGH.

Positions 308–313 (CHRSHM) match the HXXXXD motif motif.

The protein belongs to the GPAT/DAPAT family.

It is found in the cell inner membrane. It carries out the reaction sn-glycerol 3-phosphate + an acyl-CoA = a 1-acyl-sn-glycero-3-phosphate + CoA. Its pathway is phospholipid metabolism; CDP-diacylglycerol biosynthesis; CDP-diacylglycerol from sn-glycerol 3-phosphate: step 1/3. This chain is Glycerol-3-phosphate acyltransferase, found in Shewanella denitrificans (strain OS217 / ATCC BAA-1090 / DSM 15013).